The following is a 293-amino-acid chain: Probable xyloglucan endotransglucosylase/hydrolase protein 7 (293 aa).

Residues 1–29 (MVVSLFSSRNVFYTLSLCLFAALYQPVMS) form the signal peptide. Residues 30-223 (RPAKFEDDFR…WSRAPFYAYY (194 aa)) enclose the GH16 domain. The active-site Nucleophile is Glu109. The Proton donor role is filled by Glu113. Glu113 contributes to the xyloglucan binding site. An N-linked (GlcNAc...) asparagine glycan is attached at Asn117. Xyloglucan contacts are provided by residues 126–128 (QTN), 136–138 (DRE), 202–203 (DW), and Gly207. N-linked (GlcNAc...) asparagine glycosylation is present at Asn213. Intrachain disulfides connect Cys231-Cys239 and Cys276-Cys289. Xyloglucan is bound at residue Arg281.

It belongs to the glycosyl hydrolase 16 family. XTH group 1 subfamily. In terms of processing, contains at least one intrachain disulfide bond essential for its enzymatic activity.

Its subcellular location is the secreted. It localises to the cell wall. The protein resides in the extracellular space. It is found in the apoplast. It catalyses the reaction breaks a beta-(1-&gt;4) bond in the backbone of a xyloglucan and transfers the xyloglucanyl segment on to O-4 of the non-reducing terminal glucose residue of an acceptor, which can be a xyloglucan or an oligosaccharide of xyloglucan.. In terms of biological role, catalyzes xyloglucan endohydrolysis (XEH) and/or endotransglycosylation (XET). Cleaves and religates xyloglucan polymers, an essential constituent of the primary cell wall, and thereby participates in cell wall construction of growing tissues. The polypeptide is Probable xyloglucan endotransglucosylase/hydrolase protein 7 (XTH7) (Arabidopsis thaliana (Mouse-ear cress)).